A 396-amino-acid chain; its full sequence is uncharacterized protein (396 aa).

This is an uncharacterized protein from Psittacid herpesvirus 1 (isolate Amazon parrot/-/97-0001/1997) (PsHV-1).